Here is a 572-residue protein sequence, read N- to C-terminus: Nucleolin 1 (572 aa).

2 disordered regions span residues 1–312 (MGKA…ESAT) and 488–572 (DEAK…FGDE). Low complexity predominate over residues 7 to 21 (KSVAVAVAPAAVPAK). Basic and acidic residues predominate over residues 27-38 (KREAEDEIEKAV). Low complexity-rich tracts occupy residues 45 to 58 (AAAA…PAPK) and 72 to 81 (KAASSSSGSS). Composition is skewed to acidic residues over residues 82–91 (SEEDSSESEE), 109–122 (SSDE…DDED), 144–156 (SESD…DEDE), 177–191 (DSSE…SDED), 208–222 (STDG…EDED), 235–247 (SDEE…ESSD), and 261–276 (ESSE…EEDE). Positions 300–311 (PASNQSQGTESA) are enriched in polar residues. RRM domains lie at 311–387 (ATLF…LAHE) and 411–492 (QSIF…EAKP). Composition is skewed to basic and acidic residues over residues 488-520 (DEAK…DRFG) and 528-545 (GGRD…DGGR). Polar residues predominate over residues 553-566 (QSRQSAGTASTGKK).

The protein resides in the nucleus. It localises to the nucleolus. Involved in pre-rRNA processing and ribosome assembly. This chain is Nucleolin 1, found in Oryza sativa subsp. japonica (Rice).